We begin with the raw amino-acid sequence, 403 residues long: MSKFNRIHLVVLDSVGIGAAPDADKFFNAGVADTDSDTLGHISEAAGLSVPNMAKIGLGNISRPIPLKTVPTEDNPTGYVTKLEEVSLGKDTMTGHWEIMGLNITEPFDTFWNGFPEEILTKIEEFSGRKIIREANKPYSGTAVIDDFGPRQMETGELIVYTSADPVLQIAAHEDIIPVEELYKICEYARSITLERPALLGRIIARPYVGDPGNFTRTANRHDYAVSPFQDTVLNKLADAGVPTYAVGKINDIFNGSGITNDMGHNKSNSHGIDTLIKTLQLPEFTKGFSFTNLVDFDANFGHRRDPEGYRDCLHEFDNRLPEIIANMKEDDLLLITADHGNDPTYAGTDHTREYIPLLAYSVSFTGNGLIPQGHFADISATVAENFGVDTAMIGESFLSHLK.

Mn(2+) is bound by residues Asp13, Asp298, His303, Asp339, His340, and His351.

It belongs to the phosphopentomutase family. Requires Mn(2+) as cofactor.

It is found in the cytoplasm. It catalyses the reaction 2-deoxy-alpha-D-ribose 1-phosphate = 2-deoxy-D-ribose 5-phosphate. It carries out the reaction alpha-D-ribose 1-phosphate = D-ribose 5-phosphate. It functions in the pathway carbohydrate degradation; 2-deoxy-D-ribose 1-phosphate degradation; D-glyceraldehyde 3-phosphate and acetaldehyde from 2-deoxy-alpha-D-ribose 1-phosphate: step 1/2. In terms of biological role, isomerase that catalyzes the conversion of deoxy-ribose 1-phosphate (dRib-1-P) and ribose 1-phosphate (Rib-1-P) to deoxy-ribose 5-phosphate (dRib-5-P) and ribose 5-phosphate (Rib-5-P), respectively. The polypeptide is Phosphopentomutase (Streptococcus pyogenes serotype M3 (strain ATCC BAA-595 / MGAS315)).